The primary structure comprises 214 residues: Ras-related protein RABH1c (214 aa).

16–23 (GDQSVGKT) lines the GTP pocket. The short motif at 38 to 46 (YQPTIGIDF) is the Effector region element. Residues 64–68 (DTAGQ), 123–126 (NKTD), and 153–154 (SA) contribute to the GTP site. The interval 194 to 214 (TSNSSQGEQQGGAGGGGGCSC) is disordered. The span at 202-214 (QQGGAGGGGGCSC) shows a compositional bias: gly residues. 2 S-geranylgeranyl cysteine lipidation sites follow: Cys212 and Cys214. Position 214 is a cysteine methyl ester (Cys214).

The protein belongs to the small GTPase superfamily. Rab family. Interacts with the C-terminus of GC5, but not with GC3.

It is found in the golgi apparatus membrane. The protein resides in the cytoplasm. It localises to the cytosol. Protein transport. Regulator of membrane traffic from the Golgi apparatus towards the endoplasmic reticulum (ER). This Arabidopsis thaliana (Mouse-ear cress) protein is Ras-related protein RABH1c (RABH1C).